Here is a 335-residue protein sequence, read N- to C-terminus: MKQIAATSGPTNIGLLSVGSYRPQRVVTNDELCQNIDSSDEWIYSRTGIKTRRFAARDESTASMATEAGREAIAKAGLEASDIDCVVVATSTHFLQTPACGPAVAAALGATGVPAFDISAGCAGFGYALGVAADMVRGGTAGKVLVLGSEKLSPTVDMTDRSNCFIFADGAAGVVVGETPTQGIGPTVWGSDGTQATAIRQDIDWMDYLDRPTGPRPFLRLEGSAVFRWAAFEMGKVGQQAMDAAGVRPDEIDVFLPHQANSRINEILAKSLELRPDAVIANDIEHTGNTSAASIPLAMAEVLATGAAKAGDLALLIGYGAGLSYTAQVVRLPPG.

Active-site residues include Cys122 and His258. Positions 259-263 (QANSR) are ACP-binding. Asn289 is a catalytic residue.

Belongs to the thiolase-like superfamily. FabH family. Homodimer.

Its subcellular location is the cytoplasm. It catalyses the reaction malonyl-[ACP] + dodecanoyl-CoA + H(+) = 3-oxotetradecanoyl-[ACP] + CO2 + CoA. The protein operates within lipid metabolism; fatty acid biosynthesis. It participates in lipid metabolism; mycolic acid biosynthesis. Its function is as follows. Catalyzes the condensation reaction of fatty acid synthesis by the addition to an acyl acceptor of two carbons from malonyl-ACP. Catalyzes the first condensation reaction which initiates fatty acid synthesis and may therefore play a role in governing the total rate of fatty acid production. Possesses both acetoacetyl-ACP synthase and acetyl transacylase activities. Its substrate specificity determines the biosynthesis of branched-chain and/or straight-chain of fatty acids. The chain is Mycobacterial beta-ketoacyl-[acyl-carrier-protein] synthase III from Mycolicibacterium paratuberculosis (strain ATCC BAA-968 / K-10) (Mycobacterium paratuberculosis).